We begin with the raw amino-acid sequence, 150 residues long: Nucleoside diphosphate kinase (150 aa).

6 residues coordinate ATP: Lys9, Phe57, Arg85, Thr91, Arg102, and Asn112. The active-site Pros-phosphohistidine intermediate is His115.

Belongs to the NDK family. In terms of assembly, homotetramer. Mg(2+) serves as cofactor.

It localises to the cytoplasm. It carries out the reaction a 2'-deoxyribonucleoside 5'-diphosphate + ATP = a 2'-deoxyribonucleoside 5'-triphosphate + ADP. It catalyses the reaction a ribonucleoside 5'-diphosphate + ATP = a ribonucleoside 5'-triphosphate + ADP. Major role in the synthesis of nucleoside triphosphates other than ATP. The ATP gamma phosphate is transferred to the NDP beta phosphate via a ping-pong mechanism, using a phosphorylated active-site intermediate. The sequence is that of Nucleoside diphosphate kinase from Thermosynechococcus vestitus (strain NIES-2133 / IAM M-273 / BP-1).